The following is a 210-amino-acid chain: 3-hexulose-6-phosphate synthase (210 aa).

Belongs to the HPS/KGPDC family. HPS subfamily.

It carries out the reaction D-ribulose 5-phosphate + formaldehyde = D-arabino-hex-3-ulose 6-phosphate. It functions in the pathway one-carbon metabolism; formaldehyde assimilation via RuMP pathway; D-fructose 6-phosphate from D-ribulose 5-phosphate and formaldehyde: step 1/2. Functionally, catalyzes the condensation of ribulose 5-phosphate with formaldehyde to form 3-hexulose 6-phosphate. This Staphylococcus epidermidis (strain ATCC 35984 / DSM 28319 / BCRC 17069 / CCUG 31568 / BM 3577 / RP62A) protein is 3-hexulose-6-phosphate synthase.